Reading from the N-terminus, the 398-residue chain is Heat-inducible transcription repressor HrcA (398 aa).

This sequence belongs to the HrcA family.

Its function is as follows. Negative regulator of class I heat shock genes (grpE-dnaK-dnaJ and groELS operons). Prevents heat-shock induction of these operons. The protein is Heat-inducible transcription repressor HrcA of Chlamydia pneumoniae (Chlamydophila pneumoniae).